The sequence spans 121 residues: Small ribosomal subunit protein uS13 (121 aa).

Positions 88–121 are disordered; it reads GMRHRRGLPTRGQNTKNNARTRKGPAKSIAGKKK. Residues 106-121 show a composition bias toward basic residues; that stretch reads ARTRKGPAKSIAGKKK.

It belongs to the universal ribosomal protein uS13 family. As to quaternary structure, part of the 30S ribosomal subunit. Forms a loose heterodimer with protein S19. Forms two bridges to the 50S subunit in the 70S ribosome.

In terms of biological role, located at the top of the head of the 30S subunit, it contacts several helices of the 16S rRNA. In the 70S ribosome it contacts the 23S rRNA (bridge B1a) and protein L5 of the 50S subunit (bridge B1b), connecting the 2 subunits; these bridges are implicated in subunit movement. Contacts the tRNAs in the A and P-sites. The sequence is that of Small ribosomal subunit protein uS13 from Lactococcus lactis subsp. cremoris (strain MG1363).